Consider the following 145-residue polypeptide: Large ribosomal subunit protein uL13 (145 aa).

Belongs to the universal ribosomal protein uL13 family. In terms of assembly, part of the 50S ribosomal subunit. Binds to Obg (AC P20964).

In terms of biological role, this protein is one of the early assembly proteins of the 50S ribosomal subunit, although it is not seen to bind rRNA by itself. It is important during the early stages of 50S assembly. In Bacillus subtilis (strain 168), this protein is Large ribosomal subunit protein uL13.